An 851-amino-acid polypeptide reads, in one-letter code: Venom phosphodiesterase 1 (851 aa).

The N-terminal stretch at 1 to 23 is a signal peptide; that stretch reads MIQQKVLFISLVAVTLGLGLGLG. SMB domains are found at residues 30–73 and 74–118; these read PQVS…VLPT and QSWS…GETS. Intrachain disulfides connect cysteine 34/cysteine 38, cysteine 34/cysteine 51, cysteine 38/cysteine 69, cysteine 49/cysteine 51, cysteine 49/cysteine 62, cysteine 55/cysteine 61, cysteine 62/cysteine 69, cysteine 78/cysteine 83, cysteine 78/cysteine 95, cysteine 83/cysteine 113, cysteine 93/cysteine 95, cysteine 93/cysteine 106, cysteine 99/cysteine 105, cysteine 106/cysteine 113, cysteine 124/cysteine 170, and cysteine 132/cysteine 344. N-linked (GlcNAc...) asparagine glycosylation occurs at asparagine 39. Positions 58–60 match the Cell attachment site motif; sequence RQA. The a divalent metal cation site is built by aspartate 147 and threonine 185. Residue threonine 185 is the AMP-threonine intermediate of the active site. Asparagine 216, asparagine 259, and asparagine 270 each carry an N-linked (GlcNAc...) asparagine glycan. Lysine 271 is a binding site for AMP. A divalent metal cation-binding residues include aspartate 305, histidine 309, aspartate 352, and histidine 353. Residue histidine 309 coordinates AMP. 6 cysteine pairs are disulfide-bonded: cysteine 360–cysteine 457, cysteine 408–cysteine 793, cysteine 541–cysteine 599, cysteine 554–cysteine 654, cysteine 556–cysteine 639, and cysteine 762–cysteine 772. Asparagine 405 is a glycosylation site (N-linked (GlcNAc...) asparagine). Histidine 462 provides a ligand contact to a divalent metal cation. N-linked (GlcNAc...) asparagine glycosylation is found at asparagine 512, asparagine 594, asparagine 674, and asparagine 745.

Belongs to the nucleotide pyrophosphatase/phosphodiesterase family. As to quaternary structure, monomer cleaved in two subunits; disulfide-linked. Is synthesized as a single-chain protein and is subsequently cleaved to form a two-subunit protein held together with disulfide bonds. Requires a divalent metal cation as cofactor. As to expression, expressed by venom gland.

The protein resides in the secreted. It catalyses the reaction ADP + H2O = AMP + phosphate + H(+). In terms of biological role, hydrolyzes ADP with high activity. Shows weak or no activity on 5'-AMP, 5'-GMP, 3'-AMP, ATP, cAMP, and cGMP. Is devoid of monophosphatase and proteinase activities. Dose-dependently inhibits platelet aggregation induced by ADP and collagen. This chain is Venom phosphodiesterase 1, found in Crotalus adamanteus (Eastern diamondback rattlesnake).